The sequence spans 371 residues: Anhydro-N-acetylmuramic acid kinase (371 aa).

15–22 (GTSLDGVD) contacts ATP.

The protein belongs to the anhydro-N-acetylmuramic acid kinase family.

It carries out the reaction 1,6-anhydro-N-acetyl-beta-muramate + ATP + H2O = N-acetyl-D-muramate 6-phosphate + ADP + H(+). Its pathway is amino-sugar metabolism; 1,6-anhydro-N-acetylmuramate degradation. The protein operates within cell wall biogenesis; peptidoglycan recycling. Functionally, catalyzes the specific phosphorylation of 1,6-anhydro-N-acetylmuramic acid (anhMurNAc) with the simultaneous cleavage of the 1,6-anhydro ring, generating MurNAc-6-P. Is required for the utilization of anhMurNAc either imported from the medium or derived from its own cell wall murein, and thus plays a role in cell wall recycling. The chain is Anhydro-N-acetylmuramic acid kinase from Cereibacter sphaeroides (strain ATCC 17023 / DSM 158 / JCM 6121 / CCUG 31486 / LMG 2827 / NBRC 12203 / NCIMB 8253 / ATH 2.4.1.) (Rhodobacter sphaeroides).